We begin with the raw amino-acid sequence, 72 residues long: Disintegrin crotatroxin (72 aa).

One can recognise a Disintegrin domain in the interval 1 to 72 (AGEECDCGSP…ADCPRNGLYG (72 aa)). Cystine bridges form between Cys5–Cys20, Cys7–Cys15, Cys14–Cys37, Cys28–Cys34, Cys33–Cys58, and Cys46–Cys65. A Cell attachment site motif is present at residues 50–52 (RGD).

Belongs to the venom metalloproteinase (M12B) family. P-II subfamily. P-IIa sub-subfamily. Monomer. In terms of tissue distribution, expressed by the venom gland.

The protein localises to the secreted. Inhibits fibrinogen interaction with platelets. Acts by binding to the alpha-IIb/beta-3 (ITGA2B/ITGB3) on the platelet surface and inhibits aggregation induced by ADP, thrombin, platelet-activating factor and collagen. Functionally, inhibits ADP-induced platelet aggregation (IC(50) = 17.5nM), cancer cell migration in vitro, and experimental lung tumor colonization of cancer cells. The sequence is that of Disintegrin crotatroxin from Crotalus atrox (Western diamondback rattlesnake).